The primary structure comprises 560 residues: DNA ligase B (560 aa).

The active-site N6-AMP-lysine intermediate is the lysine 124.

It belongs to the NAD-dependent DNA ligase family. LigB subfamily.

It carries out the reaction NAD(+) + (deoxyribonucleotide)n-3'-hydroxyl + 5'-phospho-(deoxyribonucleotide)m = (deoxyribonucleotide)n+m + AMP + beta-nicotinamide D-nucleotide.. Functionally, catalyzes the formation of phosphodiester linkages between 5'-phosphoryl and 3'-hydroxyl groups in double-stranded DNA using NAD as a coenzyme and as the energy source for the reaction. The sequence is that of DNA ligase B from Escherichia coli O157:H7.